The following is a 95-amino-acid chain: Protein GOLVEN 9 (95 aa).

The signal sequence occupies residues 1–24 (MKKTSLKLMTLVLGFCFVIYLLQG). A propeptide spanning residues 25 to 73 (PRGGSRNGDLLIARKLISLEPIETKNAARSLKDSISTDLEEEVDRLMEH) is cleaved from the precursor. The tract at residues 72–95 (EHEYPSPVKPRKRTPVHNGVRNRH) is disordered. Tyrosine 75 bears the Sulfotyrosine mark. The span at 80–95 (KPRKRTPVHNGVRNRH) shows a compositional bias: basic residues. Proline 86 is modified (hydroxyproline). The propeptide occupies 90–95 (GVRNRH).

This sequence belongs to the RGF family. Binds to LRR receptor-like serine/threonine-protein kinases to trigger their dimerization with SERK proteins and subsequent signaling. In terms of tissue distribution, expressed in roots.

Its subcellular location is the secreted. Signaling peptide (root growth factor) required during root gravitropism in a PIN2-traffic dependent manner. Regulates the pattern of root growth and lateral root development by modulating the length and the number of cortical cells in the root apical meristem (RAM), and the anticlinal asymmetric cell divisions in lateral root initiation cells. The chain is Protein GOLVEN 9 from Arabidopsis thaliana (Mouse-ear cress).